Here is a 754-residue protein sequence, read N- to C-terminus: Pentatricopeptide repeat-containing protein At3g53700, chloroplastic (754 aa).

A chloroplast-targeting transit peptide spans 1–72 (MAFSSCLKFY…DSAALRLFNL (72 aa)). PPR repeat units follow at residues 82–116 (EPAL…RCEM), 117–152 (GTST…GLKP), 153–187 (DTHF…GIKP), 188–222 (DVST…GLVP), 223–257 (DEKT…GCSW), 258–288 (SNVS…MSNQ), 294–328 (DQYT…GYDP), 329–363 (DVYT…DCSP), 364–398 (NTVT…GILP), 399–433 (DVCT…GCEP), 434–468 (DEFT…GCAR), 469–503 (SVIT…GVSR), 504–538 (NSVT…GQKP), 539–573 (DKYT…GCEP), 574–608 (DIVT…GINL), 609–643 (TPHA…NEAP), and 645–680 (DAVS…GFVP).

This sequence belongs to the PPR family. P subfamily.

Its subcellular location is the plastid. It localises to the chloroplast. Functionally, may be involved in female gametophyte development. This is Pentatricopeptide repeat-containing protein At3g53700, chloroplastic (MEE40) from Arabidopsis thaliana (Mouse-ear cress).